A 342-amino-acid polypeptide reads, in one-letter code: Tetraacyldisaccharide 4'-kinase (342 aa).

Thr-68–Thr-75 lines the ATP pocket.

Belongs to the LpxK family.

It carries out the reaction a lipid A disaccharide + ATP = a lipid IVA + ADP + H(+). Its pathway is glycolipid biosynthesis; lipid IV(A) biosynthesis; lipid IV(A) from (3R)-3-hydroxytetradecanoyl-[acyl-carrier-protein] and UDP-N-acetyl-alpha-D-glucosamine: step 6/6. Its function is as follows. Transfers the gamma-phosphate of ATP to the 4'-position of a tetraacyldisaccharide 1-phosphate intermediate (termed DS-1-P) to form tetraacyldisaccharide 1,4'-bis-phosphate (lipid IVA). This Burkholderia multivorans (strain ATCC 17616 / 249) protein is Tetraacyldisaccharide 4'-kinase.